A 440-amino-acid polypeptide reads, in one-letter code: 3-phosphoshikimate 1-carboxyvinyltransferase (440 aa).

3-phosphoshikimate is bound by residues K26, S27, and R31. Phosphoenolpyruvate is bound at residue K26. G99 and R127 together coordinate phosphoenolpyruvate. 3-phosphoshikimate contacts are provided by S172, Q174, D320, and K347. Phosphoenolpyruvate is bound at residue Q174. The active-site Proton acceptor is the D320. Phosphoenolpyruvate contacts are provided by R351 and R392.

This sequence belongs to the EPSP synthase family. As to quaternary structure, monomer.

It localises to the cytoplasm. It catalyses the reaction 3-phosphoshikimate + phosphoenolpyruvate = 5-O-(1-carboxyvinyl)-3-phosphoshikimate + phosphate. The protein operates within metabolic intermediate biosynthesis; chorismate biosynthesis; chorismate from D-erythrose 4-phosphate and phosphoenolpyruvate: step 6/7. Functionally, catalyzes the transfer of the enolpyruvyl moiety of phosphoenolpyruvate (PEP) to the 5-hydroxyl of shikimate-3-phosphate (S3P) to produce enolpyruvyl shikimate-3-phosphate and inorganic phosphate. The sequence is that of 3-phosphoshikimate 1-carboxyvinyltransferase from Xanthomonas axonopodis pv. citri (strain 306).